Reading from the N-terminus, the 128-residue chain is Ribosome-binding factor A (128 aa).

Belongs to the RbfA family. As to quaternary structure, monomer. Binds 30S ribosomal subunits, but not 50S ribosomal subunits or 70S ribosomes.

The protein resides in the cytoplasm. One of several proteins that assist in the late maturation steps of the functional core of the 30S ribosomal subunit. Associates with free 30S ribosomal subunits (but not with 30S subunits that are part of 70S ribosomes or polysomes). Required for efficient processing of 16S rRNA. May interact with the 5'-terminal helix region of 16S rRNA. The polypeptide is Ribosome-binding factor A (Acidithiobacillus ferrooxidans (strain ATCC 23270 / DSM 14882 / CIP 104768 / NCIMB 8455) (Ferrobacillus ferrooxidans (strain ATCC 23270))).